Here is a 362-residue protein sequence, read N- to C-terminus: tRNA/tmRNA (uracil-C(5))-methyltransferase (362 aa).

S-adenosyl-L-methionine contacts are provided by Gln-182, Tyr-210, Asn-215, Glu-231, and Asp-293. Catalysis depends on Cys-318, which acts as the Nucleophile. Catalysis depends on Glu-352, which acts as the Proton acceptor.

The protein belongs to the class I-like SAM-binding methyltransferase superfamily. RNA M5U methyltransferase family. TrmA subfamily.

The enzyme catalyses uridine(54) in tRNA + S-adenosyl-L-methionine = 5-methyluridine(54) in tRNA + S-adenosyl-L-homocysteine + H(+). The catalysed reaction is uridine(341) in tmRNA + S-adenosyl-L-methionine = 5-methyluridine(341) in tmRNA + S-adenosyl-L-homocysteine + H(+). In terms of biological role, dual-specificity methyltransferase that catalyzes the formation of 5-methyluridine at position 54 (m5U54) in all tRNAs, and that of position 341 (m5U341) in tmRNA (transfer-mRNA). In Neisseria meningitidis serogroup A / serotype 4A (strain DSM 15465 / Z2491), this protein is tRNA/tmRNA (uracil-C(5))-methyltransferase.